A 142-amino-acid polypeptide reads, in one-letter code: Cytochrome c-type biogenesis protein CcmE (142 aa).

Residues 1 to 2 (MK) are Cytoplasmic-facing. The helical; Signal-anchor for type II membrane protein transmembrane segment at 3–23 (GKYLLGILVILGALGYMVFGG) threads the bilayer. Over 24–142 (LGRNLVYFLT…EVRKLIEEAQ (119 aa)) the chain is Periplasmic. H118 and Y122 together coordinate heme.

This sequence belongs to the CcmE/CycJ family.

The protein resides in the cell inner membrane. Functionally, heme chaperone required for the biogenesis of c-type cytochromes. Transiently binds heme delivered by CcmC and transfers the heme to apo-cytochromes in a process facilitated by CcmF and CcmH. This chain is Cytochrome c-type biogenesis protein CcmE, found in Thermus thermophilus (strain ATCC BAA-163 / DSM 7039 / HB27).